The primary structure comprises 355 residues: Peptide chain release factor 1 (355 aa).

Q231 is subject to N5-methylglutamine. Residues 280–291 show a composition bias toward basic and acidic residues; that stretch reads SERLAKESEARK. A disordered region spans residues 280-303; that stretch reads SERLAKESEARKSQVGSGDRSERI.

The protein belongs to the prokaryotic/mitochondrial release factor family. Post-translationally, methylated by PrmC. Methylation increases the termination efficiency of RF1.

Its subcellular location is the cytoplasm. Peptide chain release factor 1 directs the termination of translation in response to the peptide chain termination codons UAG and UAA. This Campylobacter jejuni subsp. jejuni serotype O:6 (strain 81116 / NCTC 11828) protein is Peptide chain release factor 1.